A 131-amino-acid chain; its full sequence is Histone H2A.2 (131 aa).

The segment at 1–22 is disordered; sequence MSGGKGKAGSSEKASTSRSAKA. Residue Ser2 is modified to N-acetylserine. Residues Lys5 and Lys7 each carry the N6-acetyllysine modification. An N5-methylglutamine modification is found at Gln105. The residue at position 128 (Ser128) is a Phosphoserine. Positions 128-129 match the [ST]-Q motif motif; the sequence is SQ.

This sequence belongs to the histone H2A family. As to quaternary structure, the nucleosome is a histone octamer containing two molecules each of H2A, H2B, H3 and H4 assembled in one H3-H4 heterotetramer and two H2A-H2B heterodimers. The octamer wraps approximately 147 bp of DNA. Post-translationally, phosphorylated to form H2AS128ph (gamma-H2A) in response to DNA double-strand breaks (DSBs) generated by exogenous genotoxic agents and by stalled replication forks. Phosphorylation is dependent on the DNA damage checkpoint kinases MEC1/ATR and TEL1/ATM, spreads on either side of a detected DSB site and may mark the surrounding chromatin for recruitment of proteins required for DNA damage signaling and repair. Gamma-H2A is removed from the DNA prior to the strand invasion-primer extension step of the repair process and subsequently dephosphorylated. Dephosphorylation is necessary for efficient recovery from the DNA damage checkpoint. Acetylated by ESA1 to form H2AK4ac and H2AK7ac.

The protein localises to the nucleus. Its subcellular location is the chromosome. Functionally, core component of nucleosome which plays a central role in DNA double strand break (DSB) repair. Nucleosomes wrap and compact DNA into chromatin, limiting DNA accessibility to the cellular machineries which require DNA as a template. Histones thereby play a central role in transcription regulation, DNA repair, DNA replication and chromosomal stability. DNA accessibility is regulated via a complex set of post-translational modifications of histones, also called histone code, and nucleosome remodeling. In Candida albicans (strain SC5314 / ATCC MYA-2876) (Yeast), this protein is Histone H2A.2 (HTA2).